Here is a 284-residue protein sequence, read N- to C-terminus: Hydrogenase expression/formation protein HupQ (284 aa).

The segment at Met1–Leu23 is disordered.

It belongs to the HupH/HyaF family.

The protein is Hydrogenase expression/formation protein HupQ (hupQ) of Azotobacter chroococcum mcd 1.